The following is a 147-amino-acid chain: Deoxyuridine 5'-triphosphate nucleotidohydrolase (147 aa).

Substrate contacts are provided by residues 67 to 69 (RSG), asparagine 80, and 84 to 86 (TID).

It belongs to the dUTPase family. Mg(2+) serves as cofactor.

It carries out the reaction dUTP + H2O = dUMP + diphosphate + H(+). The protein operates within pyrimidine metabolism; dUMP biosynthesis; dUMP from dCTP (dUTP route): step 2/2. In terms of biological role, this enzyme is involved in nucleotide metabolism: it produces dUMP, the immediate precursor of thymidine nucleotides and it decreases the intracellular concentration of dUTP so that uracil cannot be incorporated into DNA. This is Deoxyuridine 5'-triphosphate nucleotidohydrolase from Anaeromyxobacter dehalogenans (strain 2CP-C).